Consider the following 60-residue polypeptide: Single-pass membrane and coiled-coil domain-containing protein 4 homolog (60 aa).

The tract at residues Met-1–Glu-21 is disordered. A compositionally biased stretch (basic and acidic residues) spans Gln-8–Glu-21. The stretch at Lys-10–Ile-33 forms a coiled coil. Residues Thr-32–Lys-52 traverse the membrane as a helical segment.

Belongs to the SMCO4 family.

The protein localises to the membrane. The sequence is that of Single-pass membrane and coiled-coil domain-containing protein 4 homolog from Aedes aegypti (Yellowfever mosquito).